A 99-amino-acid chain; its full sequence is Aspartyl/glutamyl-tRNA(Asn/Gln) amidotransferase subunit C (99 aa).

The protein belongs to the GatC family. Heterotrimer of A, B and C subunits.

It carries out the reaction L-glutamyl-tRNA(Gln) + L-glutamine + ATP + H2O = L-glutaminyl-tRNA(Gln) + L-glutamate + ADP + phosphate + H(+). The enzyme catalyses L-aspartyl-tRNA(Asn) + L-glutamine + ATP + H2O = L-asparaginyl-tRNA(Asn) + L-glutamate + ADP + phosphate + 2 H(+). Functionally, allows the formation of correctly charged Asn-tRNA(Asn) or Gln-tRNA(Gln) through the transamidation of misacylated Asp-tRNA(Asn) or Glu-tRNA(Gln) in organisms which lack either or both of asparaginyl-tRNA or glutaminyl-tRNA synthetases. The reaction takes place in the presence of glutamine and ATP through an activated phospho-Asp-tRNA(Asn) or phospho-Glu-tRNA(Gln). This chain is Aspartyl/glutamyl-tRNA(Asn/Gln) amidotransferase subunit C, found in Variovorax paradoxus (strain S110).